The primary structure comprises 190 residues: CDP-diacylglycerol--glycerol-3-phosphate 3-phosphatidyltransferase (190 aa).

Topologically, residues 6–17 (GVFNIPMYLTLF) are cytoplasmic. Residues 18–42 (RIIMVPCFVAVFYWPIYWSPMLCTL) form a helical membrane-spanning segment. Over 43–65 (IFFIAAITDWFDGFLARRWNQTS) the chain is Periplasmic. Residues 66–86 (RIGGFLDPIADKIMIITALIL) traverse the membrane as a helical segment. Over 87–91 (ISEHF) the chain is Cytoplasmic. Residues 92 to 112 (HVWWMTLPISSIIIREILISS) traverse the membrane as a helical segment. The Periplasmic segment spans residues 113–150 (LRECIARVDNKNNISVIWLSKVKTFAQMLALIALLCRL). The helical transmembrane segment at 151–173 (NEWTVIMGVISLYTAMLLTLWSM) threads the bilayer. The Cytoplasmic portion of the chain corresponds to 174–186 (CYYVYSVSSILLQ).

Belongs to the CDP-alcohol phosphatidyltransferase class-I family.

It localises to the cell inner membrane. It catalyses the reaction a CDP-1,2-diacyl-sn-glycerol + sn-glycerol 3-phosphate = a 1,2-diacyl-sn-glycero-3-phospho-(1'-sn-glycero-3'-phosphate) + CMP + H(+). It participates in phospholipid metabolism; phosphatidylglycerol biosynthesis; phosphatidylglycerol from CDP-diacylglycerol: step 1/2. Catalyzes the conversion of cytidine diphosphate diacylglycerol (CDP-DG) and glycerol 3-phosphate into phosphatidylglycerol. Essential for the synthesis of anionic phospholipids, thereby playing a role in balancing the ratio of zwitterionic and anionic phospholipids, which is thought to be important for normal membrane function. This Blochmanniella floridana protein is CDP-diacylglycerol--glycerol-3-phosphate 3-phosphatidyltransferase.